The primary structure comprises 369 residues: Flagellar P-ring protein (369 aa).

The N-terminal stretch at 1–22 (MFNARRLIAATLLMSCAFGAHA) is a signal peptide.

It belongs to the FlgI family. The basal body constitutes a major portion of the flagellar organelle and consists of four rings (L,P,S, and M) mounted on a central rod.

Its subcellular location is the periplasm. It localises to the bacterial flagellum basal body. Functionally, assembles around the rod to form the L-ring and probably protects the motor/basal body from shearing forces during rotation. The chain is Flagellar P-ring protein from Pseudomonas entomophila (strain L48).